Here is a 169-residue protein sequence, read N- to C-terminus: Styrene-oxide isomerase (169 aa).

The next 4 helical transmembrane spans lie at 13 to 33, 61 to 81, 85 to 105, and 129 to 149; these read GILM…HLVG, PALN…LGFA, PHLL…FYFF, and FLAL…LAVI.

It is found in the membrane. It catalyses the reaction styrene oxide = 2-phenylacetaldehyde. Its pathway is aromatic compound metabolism. Functionally, epoxystyrene isomerase that catalyzes the second step in the aerobic styrene degradation pathway by converting epoxystyrene to phenylacetaldehyde. This Pseudomonas fluorescens protein is Styrene-oxide isomerase (styC).